Consider the following 323-residue polypeptide: Germination protease (323 aa).

The propeptide occupies 1–6 (MSVRTD).

It belongs to the peptidase A25 family. Homotetramer. In terms of processing, autoproteolytically processed. The inactive tetrameric zymogen termed p46 autoprocesses to a smaller form termed p41, which is active only during spore germination.

The catalysed reaction is Endopeptidase action with P4 Glu or Asp, P1 preferably Glu &gt; Asp, P1' hydrophobic and P2' Ala.. Functionally, initiates the rapid degradation of small, acid-soluble proteins during spore germination. This is Germination protease from Clostridium tetani (strain Massachusetts / E88).